The following is a 287-amino-acid chain: Polyamine aminopropyltransferase (287 aa).

Residues 5–238 (EIWYETLHAN…GIMTFAWASN (234 aa)) form the PABS domain. Gln33 serves as a coordination point for S-methyl-5'-thioadenosine. His64 and Asp88 together coordinate spermidine. Residues Glu108 and 140-141 (DG) contribute to the S-methyl-5'-thioadenosine site. Asp158 serves as the catalytic Proton acceptor. A spermidine-binding site is contributed by 158–161 (DCTD). Residue Pro165 participates in S-methyl-5'-thioadenosine binding.

The protein belongs to the spermidine/spermine synthase family. In terms of assembly, homodimer or homotetramer.

It localises to the cytoplasm. It catalyses the reaction S-adenosyl 3-(methylsulfanyl)propylamine + putrescine = S-methyl-5'-thioadenosine + spermidine + H(+). It functions in the pathway amine and polyamine biosynthesis; spermidine biosynthesis; spermidine from putrescine: step 1/1. Its function is as follows. Catalyzes the irreversible transfer of a propylamine group from the amino donor S-adenosylmethioninamine (decarboxy-AdoMet) to putrescine (1,4-diaminobutane) to yield spermidine. The sequence is that of Polyamine aminopropyltransferase from Pectobacterium atrosepticum (strain SCRI 1043 / ATCC BAA-672) (Erwinia carotovora subsp. atroseptica).